A 143-amino-acid polypeptide reads, in one-letter code: uncharacterized protein (143 aa).

Residues M1 to A38 constitute a mitochondrion transit peptide.

It is found in the mitochondrion. This is an uncharacterized protein from Schizosaccharomyces pombe (strain 972 / ATCC 24843) (Fission yeast).